Here is a 37-residue protein sequence, read N- to C-terminus: Large ribosomal subunit protein bL36 (37 aa).

It belongs to the bacterial ribosomal protein bL36 family.

This is Large ribosomal subunit protein bL36 from Vibrio atlanticus (strain LGP32) (Vibrio splendidus (strain Mel32)).